The chain runs to 753 residues: Rsm22-cox11 tandem protein 2, mitochondrial (753 aa).

A mitochondrion-targeting transit peptide spans 1-39 (MPILTCRYKILFLYNLRNCFTFQNQRCLIPYGTTTTIRW). 4 residues coordinate [4Fe-4S] cluster: cysteine 323, cysteine 329, cysteine 342, and cysteine 430. A helical membrane pass occupies residues 571 to 591 (IYYLVAISIFALGLTYAAVPL). The Mitochondrial intermembrane portion of the chain corresponds to 592-753 (YRLFCSKTGY…TNGNLLTKLN (162 aa)).

This sequence in the N-terminal section; belongs to the methyltransferase superfamily. Rsm22 family. The protein in the C-terminal section; belongs to the COX11/CtaG family. Associates with the mitochondrial ribosome (mitoribosome). Only transiently interacts with the mitoribosome. Specific enzymatic cleavages in vivo by mitochondrial processing peptidase (MPP) yield mature proteins including rsm22-2 and cox11-2.

It localises to the mitochondrion. It is found in the mitochondrion inner membrane. Functionally, mitochondrial ribosome (mitoribosome) assembly factor. Binds at the interface of the head and body domains of the mitochondrial small ribosomal subunit (mt-SSU), occluding the mRNA channel and preventing compaction of the head domain towards the body. Probable inactive methyltransferase: retains the characteristic folding and ability to bind S-adenosyl-L-methionine, but it probably lost its methyltransferase activity. Exerts its effect at some terminal stage of cytochrome c oxidase synthesis, probably by being involved in the insertion of the copper B into subunit I. The polypeptide is Rsm22-cox11 tandem protein 2, mitochondrial (cox1102) (Schizosaccharomyces pombe (strain 972 / ATCC 24843) (Fission yeast)).